The following is a 95-amino-acid chain: Large ribosomal subunit protein eL31 (95 aa).

The protein belongs to the eukaryotic ribosomal protein eL31 family.

The chain is Large ribosomal subunit protein eL31 (rpl31e) from Pyrococcus horikoshii (strain ATCC 700860 / DSM 12428 / JCM 9974 / NBRC 100139 / OT-3).